The chain runs to 160 residues: uncharacterized protein (160 aa).

It is found in the mitochondrion. This is an uncharacterized protein from Arabidopsis thaliana (Mouse-ear cress).